Here is a 118-residue protein sequence, read N- to C-terminus: Small ribosomal subunit protein uS13 (118 aa).

Residues 94–118 form a disordered region; that stretch reads SLPLRGQRTKTNARTRKGPRKPIRK.

It belongs to the universal ribosomal protein uS13 family. As to quaternary structure, part of the 30S ribosomal subunit. Forms a loose heterodimer with protein S19. Forms two bridges to the 50S subunit in the 70S ribosome.

Located at the top of the head of the 30S subunit, it contacts several helices of the 16S rRNA. In the 70S ribosome it contacts the 23S rRNA (bridge B1a) and protein L5 of the 50S subunit (bridge B1b), connecting the 2 subunits; these bridges are implicated in subunit movement. Contacts the tRNAs in the A and P-sites. This Shewanella sp. (strain W3-18-1) protein is Small ribosomal subunit protein uS13.